Reading from the N-terminus, the 140-residue chain is Nucleoside diphosphate kinase (140 aa).

Residues Lys-11, Phe-59, Arg-87, Thr-93, Arg-104, and Asn-114 each contribute to the ATP site. The active-site Pros-phosphohistidine intermediate is the His-117.

The protein belongs to the NDK family. Homotetramer. It depends on Mg(2+) as a cofactor.

It localises to the cytoplasm. It catalyses the reaction a 2'-deoxyribonucleoside 5'-diphosphate + ATP = a 2'-deoxyribonucleoside 5'-triphosphate + ADP. It carries out the reaction a ribonucleoside 5'-diphosphate + ATP = a ribonucleoside 5'-triphosphate + ADP. Functionally, major role in the synthesis of nucleoside triphosphates other than ATP. The ATP gamma phosphate is transferred to the NDP beta phosphate via a ping-pong mechanism, using a phosphorylated active-site intermediate. The protein is Nucleoside diphosphate kinase of Erythrobacter litoralis (strain HTCC2594).